A 330-amino-acid chain; its full sequence is Olfactory receptor 5T9 (330 aa).

Topologically, residues M1–V37 are extracellular. An N-linked (GlcNAc...) asparagine glycan is attached at N17. The chain crosses the membrane as a helical span at residues L38–V58. At L59–R66 the chain is on the cytoplasmic side. The helical transmembrane segment at L67 to T87 threads the bilayer. Residues V88 to T111 are Extracellular-facing. C109 and C201 are joined by a disulfide. The chain crosses the membrane as a helical span at residues E112–Y132. Over D133–A145 the chain is Cytoplasmic. Residues V146–M166 form a helical membrane-spanning segment. The Extracellular portion of the chain corresponds to H167 to Q208. Residues L209–S229 form a helical membrane-spanning segment. Topologically, residues Y230–I249 are cytoplasmic. Residues F250–M270 form a helical membrane-spanning segment. Residues Y271–D283 lie on the Extracellular side of the membrane. Residues M284–L304 form a helical membrane-spanning segment. Residues R305 to L330 are Cytoplasmic-facing.

This sequence belongs to the G-protein coupled receptor 1 family.

Its subcellular location is the cell membrane. Potential odorant receptor. This chain is Olfactory receptor 5T9, found in Mus musculus (Mouse).